We begin with the raw amino-acid sequence, 513 residues long: ATP synthase subunit alpha (513 aa).

An ATP-binding site is contributed by 169–176 (GDRQIGKS).

The protein belongs to the ATPase alpha/beta chains family. As to quaternary structure, F-type ATPases have 2 components, CF(1) - the catalytic core - and CF(0) - the membrane proton channel. CF(1) has five subunits: alpha(3), beta(3), gamma(1), delta(1), epsilon(1). CF(0) has three main subunits: a(1), b(2) and c(9-12). The alpha and beta chains form an alternating ring which encloses part of the gamma chain. CF(1) is attached to CF(0) by a central stalk formed by the gamma and epsilon chains, while a peripheral stalk is formed by the delta and b chains.

The protein localises to the cell inner membrane. The catalysed reaction is ATP + H2O + 4 H(+)(in) = ADP + phosphate + 5 H(+)(out). Functionally, produces ATP from ADP in the presence of a proton gradient across the membrane. The alpha chain is a regulatory subunit. This chain is ATP synthase subunit alpha, found in Colwellia psychrerythraea (strain 34H / ATCC BAA-681) (Vibrio psychroerythus).